The following is a 117-amino-acid chain: 3',5'-cyclic-AMP phosphodiesterase 4A (117 aa).

The interval 42-79 is disordered; that stretch reads KQNEVEIPSPTMKDREPQEAPRQRPCQQLPPPVPHLQP. Residues 53-63 are compositionally biased toward basic and acidic residues; sequence MKDREPQEAPR. The tract at residues 78 to 117 is catalytic; the sequence is QPMSQITGVKRLSHNSGLNNASIPRFGVKTDQEELLAQEL.

It belongs to the cyclic nucleotide phosphodiesterase family. PDE4 subfamily. Interacts with LYN (via SH3 domain). Interacts with ARRB2. It depends on Zn(2+) as a cofactor. Requires Mg(2+) as cofactor. Mn(2+) serves as cofactor. In terms of processing, proteolytically cleaved by CASP3.

The protein localises to the cytoplasm. Its subcellular location is the cytosol. It localises to the membrane. It catalyses the reaction 3',5'-cyclic AMP + H2O = AMP + H(+). Its pathway is purine metabolism; 3',5'-cyclic AMP degradation; AMP from 3',5'-cyclic AMP: step 1/1. In terms of biological role, hydrolyzes the second messenger 3',5'-cyclic AMP (cAMP), which is a key regulator of many important physiological processes. This Cavia porcellus (Guinea pig) protein is 3',5'-cyclic-AMP phosphodiesterase 4A (PDE4A).